Consider the following 365-residue polypeptide: tRNA 2-selenouridine synthase (365 aa).

In terms of domain architecture, Rhodanese spans 15-138 (FVNDHPIMDA…MRQFLIETID (124 aa)). Cys-98 acts as the S-selanylcysteine intermediate in catalysis.

Belongs to the SelU family. In terms of assembly, monomer.

It carries out the reaction 5-methylaminomethyl-2-thiouridine(34) in tRNA + selenophosphate + (2E)-geranyl diphosphate + H2O + H(+) = 5-methylaminomethyl-2-selenouridine(34) in tRNA + (2E)-thiogeraniol + phosphate + diphosphate. It catalyses the reaction 5-methylaminomethyl-2-thiouridine(34) in tRNA + (2E)-geranyl diphosphate = 5-methylaminomethyl-S-(2E)-geranyl-thiouridine(34) in tRNA + diphosphate. The enzyme catalyses 5-methylaminomethyl-S-(2E)-geranyl-thiouridine(34) in tRNA + selenophosphate + H(+) = 5-methylaminomethyl-2-(Se-phospho)selenouridine(34) in tRNA + (2E)-thiogeraniol. The catalysed reaction is 5-methylaminomethyl-2-(Se-phospho)selenouridine(34) in tRNA + H2O = 5-methylaminomethyl-2-selenouridine(34) in tRNA + phosphate. In terms of biological role, involved in the post-transcriptional modification of the uridine at the wobble position (U34) of tRNA(Lys), tRNA(Glu) and tRNA(Gln). Catalyzes the conversion of 2-thiouridine (S2U-RNA) to 2-selenouridine (Se2U-RNA). Acts in a two-step process involving geranylation of 2-thiouridine (S2U) to S-geranyl-2-thiouridine (geS2U) and subsequent selenation of the latter derivative to 2-selenouridine (Se2U) in the tRNA chain. This is tRNA 2-selenouridine synthase from Shewanella halifaxensis (strain HAW-EB4).